The primary structure comprises 213 residues: ATP-dependent Clp protease proteolytic subunit 1 (213 aa).

The active-site Nucleophile is the Ser-108. The active site involves His-133.

The protein belongs to the peptidase S14 family. In terms of assembly, fourteen ClpP subunits assemble into 2 heptameric rings which stack back to back to give a disk-like structure with a central cavity, resembling the structure of eukaryotic proteasomes.

It is found in the cytoplasm. It carries out the reaction Hydrolysis of proteins to small peptides in the presence of ATP and magnesium. alpha-casein is the usual test substrate. In the absence of ATP, only oligopeptides shorter than five residues are hydrolyzed (such as succinyl-Leu-Tyr-|-NHMec, and Leu-Tyr-Leu-|-Tyr-Trp, in which cleavage of the -Tyr-|-Leu- and -Tyr-|-Trp bonds also occurs).. Functionally, cleaves peptides in various proteins in a process that requires ATP hydrolysis. Has a chymotrypsin-like activity. Plays a major role in the degradation of misfolded proteins. The sequence is that of ATP-dependent Clp protease proteolytic subunit 1 from Frankia casuarinae (strain DSM 45818 / CECT 9043 / HFP020203 / CcI3).